A 191-amino-acid chain; its full sequence is Holliday junction branch migration complex subunit RuvA (191 aa).

A domain I region spans residues 1 to 64 (MIGSITGNVE…DNITQLYGFL (64 aa)). The segment at 65–142 (NRQEQDYLKM…KMPIEETFSI (78 aa)) is domain II. A flexible linker region spans residues 143-146 (IEND). A domain III region spans residues 146–191 (DDSLAALISLGYEKLKAFNVIQEIKSKTPDASTQEVIRKALQKLSQ).

The protein belongs to the RuvA family. Homotetramer. Forms an RuvA(8)-RuvB(12)-Holliday junction (HJ) complex. HJ DNA is sandwiched between 2 RuvA tetramers; dsDNA enters through RuvA and exits via RuvB. An RuvB hexamer assembles on each DNA strand where it exits the tetramer. Each RuvB hexamer is contacted by two RuvA subunits (via domain III) on 2 adjacent RuvB subunits; this complex drives branch migration. In the full resolvosome a probable DNA-RuvA(4)-RuvB(12)-RuvC(2) complex forms which resolves the HJ.

The protein localises to the cytoplasm. Its function is as follows. The RuvA-RuvB-RuvC complex processes Holliday junction (HJ) DNA during genetic recombination and DNA repair, while the RuvA-RuvB complex plays an important role in the rescue of blocked DNA replication forks via replication fork reversal (RFR). RuvA specifically binds to HJ cruciform DNA, conferring on it an open structure. The RuvB hexamer acts as an ATP-dependent pump, pulling dsDNA into and through the RuvAB complex. HJ branch migration allows RuvC to scan DNA until it finds its consensus sequence, where it cleaves and resolves the cruciform DNA. The polypeptide is Holliday junction branch migration complex subunit RuvA (Ehrlichia ruminantium (strain Welgevonden)).